Here is a 376-residue protein sequence, read N- to C-terminus: Mitogen-activated protein kinase 4 (376 aa).

One can recognise a Protein kinase domain in the interval Val-43–Leu-329. ATP contacts are provided by residues Ile-49–Val-57 and Lys-72. Catalysis depends on Asp-169, which acts as the Proton acceptor. Thr-201 carries the phosphothreonine modification. The TXY motif lies at Thr-201–Tyr-203. Tyr-203 is modified (phosphotyrosine).

It belongs to the protein kinase superfamily. CMGC Ser/Thr protein kinase family. MAP kinase subfamily. In terms of assembly, interacts with MEKK1, MKK1, MKK2 and MKK6. May form a ternary complex composed of MEKK1 and MKK1/MKK2 and MPK4. Interacts with MKS1 and AP2C1. May form a ternary or larger complex with MKS1 and WRKY25 and/or WRKY33. Interacts with MAP65-1. No interactions with RACK1A, RACK1B or RACK1C. Interacts directly with ASR3 and mediates its phosphorylation. Binds to MEKK2. Interacts with PAT1. Binds to HT1. In terms of processing, dually phosphorylated on Thr-201 and Tyr-203, which activates the enzyme. Autophosphorylated on serine and tyrosine residues. Dephosphorylated by DSPTP1. Phosphorylated by MKK6 in vitro. In terms of tissue distribution, ubiquitous. Expressed in the veins and stomatal guard cells of leaf plates, petioles, stem, roots and flowers.

It localises to the cytoplasm. The protein localises to the nucleus. It is found in the cytoskeleton. The enzyme catalyses L-seryl-[protein] + ATP = O-phospho-L-seryl-[protein] + ADP + H(+). The catalysed reaction is L-threonyl-[protein] + ATP = O-phospho-L-threonyl-[protein] + ADP + H(+). Its activity is regulated as follows. Activated by threonine and tyrosine phosphorylation. Activated by the MAP kinase kinases MKK1 and MKK2. Activated in response to touch, wounding, low temperature, low humidity, salt stress and the bacterial elicitors flagellin and harpin. Activated upon Pseudomonas syringae pv. tomato DC3000 infection. Repressed by the protein phosphatase 2C AP2C1. Repressed by DSPTP1-mediated dephosphorylation. Activated by the MAP kinase kinase MKK6 in vitro. In terms of biological role, the ANPs-MKK6-MPK4 module is involved in the regulation of plant cytokinesis during meiosis and mitosis. Essential to promote the progression of cytokinesis and for cellularization (formation of the cell plate) during male-specific meiosis. Involved in cortical microtubules organization and stabilization by regulating the phosphorylation state of microtubule-associated proteins such as MAP65-1. Involved in root hair development process. Negative regulator of systemic acquired resistance (SAR) and salicylic acid- (SA) mediated defense response. Required for jasmonic acid- (JA) mediated defense gene expression. May regulate activity of transcription factor controlling pathogenesis-related (PR) gene expression. Seems to act independently of the SAR regulatory protein NPR1 (Nonexpresser of PR1). Phosphorylates MKS1 and transcription factors WRKY25 and WRKY33. The MEKK1, MKK1/MKK2 and MPK4 function in a signaling pathway that modulates the expression of genes responding to biotic and abiotic stresses and also plays an important role in pathogen defense by negatively regulating innate immunity. Phosphorylates MEKK2 upon treatment with flg22. Involved in stomatal movement regulation by repressing HT1 and HT1-mediated GHR1 phosphorylation. This chain is Mitogen-activated protein kinase 4, found in Arabidopsis thaliana (Mouse-ear cress).